We begin with the raw amino-acid sequence, 449 residues long: NADH-quinone oxidoreductase subunit H (449 aa).

Transmembrane regions (helical) follow at residues 26 to 46 (FWLI…MTLF), 96 to 116 (PIFI…FAVI), 136 to 156 (LPVS…GLIL), 177 to 197 (IISY…YAGT), 211 to 231 (WYIA…GETN), 259 to 279 (FFFL…TTLF), 298 to 318 (WVPL…FIWL), 330 to 350 (FMAF…LVIA), and 365 to 385 (WLIG…LDPG). The tract at residues 396–449 (AERRKLAEAPSLESIPWPPPPPGGAHHRPAVPAGTSANGSSTVIPADPPPRQES) is disordered.

This sequence belongs to the complex I subunit 1 family. NDH-1 is composed of 14 different subunits. Subunits NuoA, H, J, K, L, M, N constitute the membrane sector of the complex.

The protein resides in the cell membrane. The catalysed reaction is a quinone + NADH + 5 H(+)(in) = a quinol + NAD(+) + 4 H(+)(out). In terms of biological role, NDH-1 shuttles electrons from NADH, via FMN and iron-sulfur (Fe-S) centers, to quinones in the respiratory chain. The immediate electron acceptor for the enzyme in this species is believed to be ubiquinone. Couples the redox reaction to proton translocation (for every two electrons transferred, four hydrogen ions are translocated across the cytoplasmic membrane), and thus conserves the redox energy in a proton gradient. This subunit may bind ubiquinone. This is NADH-quinone oxidoreductase subunit H from Frankia alni (strain DSM 45986 / CECT 9034 / ACN14a).